A 130-amino-acid polypeptide reads, in one-letter code: NADH-ubiquinone oxidoreductase chain 1 (130 aa).

Residues 45–65 (SILFMSLFSVMFCLVVYSYLW) form a helical membrane-spanning segment.

Belongs to the complex I subunit 1 family.

The protein resides in the mitochondrion inner membrane. The catalysed reaction is a ubiquinone + NADH + 5 H(+)(in) = a ubiquinol + NAD(+) + 4 H(+)(out). Functionally, core subunit of the mitochondrial membrane respiratory chain NADH dehydrogenase (Complex I) that is believed to belong to the minimal assembly required for catalysis. Complex I functions in the transfer of electrons from NADH to the respiratory chain. The immediate electron acceptor for the enzyme is believed to be ubiquinone. This Artemia salina (Brine shrimp) protein is NADH-ubiquinone oxidoreductase chain 1 (ND1).